Here is an 856-residue protein sequence, read N- to C-terminus: DNA mismatch repair protein MutS (856 aa).

600 to 607 (GPNMSGKS) is a binding site for ATP.

Belongs to the DNA mismatch repair MutS family.

Functionally, this protein is involved in the repair of mismatches in DNA. It is possible that it carries out the mismatch recognition step. This protein has a weak ATPase activity. The chain is DNA mismatch repair protein MutS from Lactobacillus acidophilus (strain ATCC 700396 / NCK56 / N2 / NCFM).